Consider the following 218-residue polypeptide: Probable 1-Cys peroxiredoxin (218 aa).

One can recognise a Thioredoxin domain in the interval W5–L166. C47 (cysteine sulfenic acid (-SOH) intermediate) is an active-site residue.

The protein belongs to the peroxiredoxin family. Prx6 subfamily.

It localises to the nucleus. Its subcellular location is the cytoplasm. It catalyses the reaction a hydroperoxide + [thioredoxin]-dithiol = an alcohol + [thioredoxin]-disulfide + H2O. Functionally, thiol-specific peroxidase that catalyzes the reduction of hydrogen peroxide and organic hydroperoxides to water and alcohols, respectively. Seems to contribute to the inhibition of germination during stress. Associated with the rehydration events involved in the recovery of the desiccation-tolerant moss. This chain is Probable 1-Cys peroxiredoxin, found in Syntrichia ruralis (Great hairy screw-moss).